The sequence spans 57 residues: Metallothionein (57 aa).

It belongs to the metallothionein superfamily. Type 14 family.

This protein complexes cadmium, zinc and copper. The sequence is that of Metallothionein (mtnA) from Thermostichus vulcanus (Synechococcus vulcanus).